A 196-amino-acid chain; its full sequence is UPF0215 protein MA_4269 (196 aa).

Belongs to the UPF0215 family.

In Methanosarcina acetivorans (strain ATCC 35395 / DSM 2834 / JCM 12185 / C2A), this protein is UPF0215 protein MA_4269.